We begin with the raw amino-acid sequence, 151 residues long: Putative phosphatidylglycerol/phosphatidylinositol transfer protein 3 (151 aa).

Positions methionine 1–serine 26 are cleaved as a signal peptide.

The protein belongs to the NPC2 family. Monomer.

Catalyzes the intermembrane transfer of phosphatidylglycerol and phosphatidylinositol. The protein is Putative phosphatidylglycerol/phosphatidylinositol transfer protein 3 of Dictyostelium discoideum (Social amoeba).